We begin with the raw amino-acid sequence, 477 residues long: Pup--protein ligase (477 aa).

Residue Glu16 participates in Mg(2+) binding. Arg60 provides a ligand contact to ATP. Mg(2+) is bound at residue Tyr62. Asp64 serves as the catalytic Proton acceptor. Position 70 (Glu70) interacts with Mg(2+). 2 residues coordinate ATP: Thr73 and Trp441.

This sequence belongs to the Pup ligase/Pup deamidase family. Pup-conjugating enzyme subfamily.

It carries out the reaction ATP + [prokaryotic ubiquitin-like protein]-L-glutamate + [protein]-L-lysine = ADP + phosphate + N(6)-([prokaryotic ubiquitin-like protein]-gamma-L-glutamyl)-[protein]-L-lysine.. It participates in protein degradation; proteasomal Pup-dependent pathway. It functions in the pathway protein modification; protein pupylation. Catalyzes the covalent attachment of the prokaryotic ubiquitin-like protein modifier Pup to the proteasomal substrate proteins, thereby targeting them for proteasomal degradation. This tagging system is termed pupylation. The ligation reaction involves the side-chain carboxylate of the C-terminal glutamate of Pup and the side-chain amino group of a substrate lysine. The protein is Pup--protein ligase of Corynebacterium kroppenstedtii (strain DSM 44385 / JCM 11950 / CIP 105744 / CCUG 35717).